We begin with the raw amino-acid sequence, 200 residues long: Formate dehydrogenase iron-sulfur subunit (200 aa).

4Fe-4S ferredoxin-type domains are found at residues 7-37 (VKFY…VGVN), 50-81 (GKEK…VRAD), and 82-111 (GIVL…FPKS). Residues C16, C19, C22, C26, C59, C62, C67, C71, C91, C94, C97, C101, C123, C126, C155, and C159 each coordinate [4Fe-4S] cluster.

In terms of assembly, formate dehydrogenase is a membrane-bound complex, formed of at least three different subunits. The cofactor is [4Fe-4S] cluster.

Functionally, this chain is an electron transfer unit containing 18 cysteine residues, 16 of which occur in four clusters. The polypeptide is Formate dehydrogenase iron-sulfur subunit (fdhB1) (Wolinella succinogenes (strain ATCC 29543 / DSM 1740 / CCUG 13145 / JCM 31913 / LMG 7466 / NCTC 11488 / FDC 602W) (Vibrio succinogenes)).